The following is a 410-amino-acid chain: Squalene synthase 1 (410 aa).

Position 2 is an N-acetylglycine (glycine 2). Transmembrane regions (helical) follow at residues serine 283–tyrosine 303 and glutamine 387–leucine 407.

Belongs to the phytoene/squalene synthase family. Mg(2+) serves as cofactor. The cofactor is Mn(2+). Expressed in all tissues analyzed (seedlings, cotyledons, inflorescences, siliques, leaves, stems and roots). Highly expressed in roots and pollen.

It localises to the endoplasmic reticulum membrane. It catalyses the reaction 2 (2E,6E)-farnesyl diphosphate + NADPH + H(+) = squalene + 2 diphosphate + NADP(+). The enzyme catalyses 2 (2E,6E)-farnesyl diphosphate + NADH + H(+) = squalene + 2 diphosphate + NAD(+). The protein operates within terpene metabolism; lanosterol biosynthesis; lanosterol from farnesyl diphosphate: step 1/3. This Arabidopsis thaliana (Mouse-ear cress) protein is Squalene synthase 1.